Reading from the N-terminus, the 177-residue chain is Inorganic pyrophosphatase (177 aa).

Substrate-binding residues include lysine 31, arginine 45, and tyrosine 57. The Mg(2+) site is built by aspartate 67, aspartate 72, and aspartate 104. Position 141 (tyrosine 141) interacts with substrate.

The protein belongs to the PPase family. In terms of assembly, homohexamer. Also forms homotrimers, but the trimeric form is 23% less active than the hexamer. In fact, likely forms a dimer of trimers. The cofactor is Mg(2+).

The protein localises to the cytoplasm. It carries out the reaction diphosphate + H2O = 2 phosphate + H(+). Its activity is regulated as follows. Inhibited by sodium fluoride (NaF) in vitro, similarly to other class A type inorganic pyrophosphatases. Its function is as follows. Catalyzes the hydrolysis of inorganic pyrophosphate (PPi) forming two phosphate ions. The hydrolysis of PPi by inorganic pyrophosphatase releases a considerable amount of energy that can drive unfavorable biochemical transformations to completion. Is not active on nucleoside triphosphates (ATP, TTP, GTP, or CTP) or nucleoside diphosphate (ADP). The sequence is that of Inorganic pyrophosphatase from Haloferax volcanii (strain ATCC 29605 / DSM 3757 / JCM 8879 / NBRC 14742 / NCIMB 2012 / VKM B-1768 / DS2) (Halobacterium volcanii).